We begin with the raw amino-acid sequence, 199 residues long: MQYPEPIAKLIDSFMKLPGIGYKTATRLAFFTLDMEKDDVTEFAKALISAQRDLSFCSICGNITEDDPCDICQDPSRDQKAVLVVEDSKDVMSMEQMKEYHGLYHVLHGVLSPMDGKGPEDINIAALLTRLQKNEAIKEVIIATNATPEGEATAMYISRLVKPSGIKVTRLAHGLSVGSDIEYADQMTLYKAVEGRTEM.

A C4-type zinc finger spans residues 57–72; the sequence is CSICGNITEDDPCDIC. A Toprim domain is found at 80-176; that stretch reads KAVLVVEDSK…KVTRLAHGLS (97 aa).

The protein belongs to the RecR family.

Functionally, may play a role in DNA repair. It seems to be involved in an RecBC-independent recombinational process of DNA repair. It may act with RecF and RecO. In Pediococcus pentosaceus (strain ATCC 25745 / CCUG 21536 / LMG 10740 / 183-1w), this protein is Recombination protein RecR.